Here is a 298-residue protein sequence, read N- to C-terminus: GTPase Era (298 aa).

The 169-residue stretch at 8–176 (HCGSVAVIGR…VRDVLKLLPE (169 aa)) folds into the Era-type G domain. Positions 16-23 (GRPNVGKS) are G1. GTP is bound at residue 16-23 (GRPNVGKS). Residues 42 to 46 (QTTRH) are G2. Positions 63–66 (DTPG) are G3. GTP is bound by residues 63–67 (DTPGL) and 125–128 (NKID). Positions 125-128 (NKID) are G4. Residues 155–157 (ISA) form a G5 region. Residues 199-283 (VREQLMRQLG…FLETWVRVRE (85 aa)) enclose the KH type-2 domain.

Belongs to the TRAFAC class TrmE-Era-EngA-EngB-Septin-like GTPase superfamily. Era GTPase family. Monomer.

It localises to the cytoplasm. Its subcellular location is the cell inner membrane. Functionally, an essential GTPase that binds both GDP and GTP, with rapid nucleotide exchange. Plays a role in 16S rRNA processing and 30S ribosomal subunit biogenesis and possibly also in cell cycle regulation and energy metabolism. This Stenotrophomonas maltophilia (strain K279a) protein is GTPase Era.